The sequence spans 371 residues: Enterobactin C-glucosyltransferase (371 aa).

Belongs to the glycosyltransferase 28 family.

The protein resides in the cytoplasm. It carries out the reaction enterobactin + UDP-alpha-D-glucose = monoglucosyl-enterobactin + UDP. The enzyme catalyses monoglucosyl-enterobactin + UDP-alpha-D-glucose = diglucosyl-enterobactin + UDP + H(+). It catalyses the reaction diglucosyl-enterobactin + UDP-alpha-D-glucose = triglucosyl-enterobactin + UDP + H(+). Its pathway is siderophore biosynthesis; enterobactin biosynthesis. Catalyzes the successive monoglucosylation, diglucosylation and triglucosylation of enterobactin (Ent). Transfers glucosyl groups from uridine-5'-diphosphoglucose (UDP-Glc) to C5 of one, two or three of the 2,3-dihydroxybenzoyl (DHB) units of Ent to yield monoglucosyl-C-Ent (MGE), diglucosyl-C-Ent (DGE) and triglucosyl-C-Ent (TGE). Glucosylation decreases the membrane affinity of Ent and increases the iron acquisition rate. This Escherichia coli O6:H1 (strain CFT073 / ATCC 700928 / UPEC) protein is Enterobactin C-glucosyltransferase.